Here is a 124-residue protein sequence, read N- to C-terminus: Meiotically up-regulated gene 103 protein (124 aa).

The protein localises to the nucleus. It localises to the nucleolus. Functionally, has a role in meiosis. This Schizosaccharomyces pombe (strain 972 / ATCC 24843) (Fission yeast) protein is Meiotically up-regulated gene 103 protein (mug103).